The chain runs to 451 residues: Bifunctional protein GlmU (451 aa).

A pyrophosphorylase region spans residues 1 to 236 (MDQTPSYSPP…YEELRGINSK (236 aa)). Residues 17-20 (LAAG), Lys-31, Gln-79, 84-85 (GT), 105-107 (YGD), Gly-144, Glu-162, Asn-177, and Asn-234 each bind UDP-N-acetyl-alpha-D-glucosamine. Asp-107 provides a ligand contact to Mg(2+). Residue Asn-234 participates in Mg(2+) binding. A linker region spans residues 237 to 257 (VELAEAEATVQIVLRRKALEN). The interval 258 to 451 (GVTMTAPETV…EIRRQLKGSV (194 aa)) is N-acetyltransferase. The UDP-N-acetyl-alpha-D-glucosamine site is built by Arg-323 and Lys-341. His-353 functions as the Proton acceptor in the catalytic mechanism. UDP-N-acetyl-alpha-D-glucosamine-binding residues include Tyr-356 and Asn-367. Acetyl-CoA contacts are provided by residues Ala-370, 376 to 377 (NY), Ser-395, Ala-413, and Arg-430.

The protein in the N-terminal section; belongs to the N-acetylglucosamine-1-phosphate uridyltransferase family. In the C-terminal section; belongs to the transferase hexapeptide repeat family. In terms of assembly, homotrimer. Requires Mg(2+) as cofactor.

Its subcellular location is the cytoplasm. It catalyses the reaction alpha-D-glucosamine 1-phosphate + acetyl-CoA = N-acetyl-alpha-D-glucosamine 1-phosphate + CoA + H(+). The enzyme catalyses N-acetyl-alpha-D-glucosamine 1-phosphate + UTP + H(+) = UDP-N-acetyl-alpha-D-glucosamine + diphosphate. The protein operates within nucleotide-sugar biosynthesis; UDP-N-acetyl-alpha-D-glucosamine biosynthesis; N-acetyl-alpha-D-glucosamine 1-phosphate from alpha-D-glucosamine 6-phosphate (route II): step 2/2. It participates in nucleotide-sugar biosynthesis; UDP-N-acetyl-alpha-D-glucosamine biosynthesis; UDP-N-acetyl-alpha-D-glucosamine from N-acetyl-alpha-D-glucosamine 1-phosphate: step 1/1. Its pathway is bacterial outer membrane biogenesis; LPS lipid A biosynthesis. Catalyzes the last two sequential reactions in the de novo biosynthetic pathway for UDP-N-acetylglucosamine (UDP-GlcNAc). The C-terminal domain catalyzes the transfer of acetyl group from acetyl coenzyme A to glucosamine-1-phosphate (GlcN-1-P) to produce N-acetylglucosamine-1-phosphate (GlcNAc-1-P), which is converted into UDP-GlcNAc by the transfer of uridine 5-monophosphate (from uridine 5-triphosphate), a reaction catalyzed by the N-terminal domain. The sequence is that of Bifunctional protein GlmU from Granulibacter bethesdensis (strain ATCC BAA-1260 / CGDNIH1).